Consider the following 498-residue polypeptide: Aspartyl aminopeptidase (498 aa).

A Zn(2+)-binding site is contributed by histidine 91. Histidine 166 lines the substrate pocket. Aspartate 274 is a Zn(2+) binding site. Glutamate 311 lines the substrate pocket. Zn(2+) is bound by residues glutamate 312 and aspartate 363. The substrate site is built by aspartate 363, histidine 366, lysine 391, and tyrosine 398. Zn(2+) is bound at residue histidine 463.

Belongs to the peptidase M18 family. As to quaternary structure, tetrahedron-shaped homododecamer built from six homodimers. Requires Zn(2+) as cofactor. The N-terminus is blocked.

The enzyme catalyses Release of an N-terminal aspartate or glutamate from a peptide, with a preference for aspartate.. Inhibited by zinc. Stimulated by calcium and bacitracin. The polypeptide is Aspartyl aminopeptidase (dapA) (Aspergillus oryzae (strain ATCC 42149 / RIB 40) (Yellow koji mold)).